A 490-amino-acid polypeptide reads, in one-letter code: Probable malate:quinone oxidoreductase (490 aa).

The protein belongs to the MQO family. FAD is required as a cofactor.

The catalysed reaction is (S)-malate + a quinone = a quinol + oxaloacetate. It functions in the pathway carbohydrate metabolism; tricarboxylic acid cycle; oxaloacetate from (S)-malate (quinone route): step 1/1. This is Probable malate:quinone oxidoreductase from Corynebacterium jeikeium (strain K411).